The chain runs to 153 residues: Nucleoside diphosphate kinase (153 aa).

6 residues coordinate ATP: Lys11, Phe59, Arg87, Thr93, Arg104, and Asn114. Residue His117 is the Pros-phosphohistidine intermediate of the active site.

Belongs to the NDK family. Requires Mg(2+) as cofactor.

It catalyses the reaction a 2'-deoxyribonucleoside 5'-diphosphate + ATP = a 2'-deoxyribonucleoside 5'-triphosphate + ADP. The catalysed reaction is a ribonucleoside 5'-diphosphate + ATP = a ribonucleoside 5'-triphosphate + ADP. Its function is as follows. Major role in the synthesis of nucleoside triphosphates other than ATP. The ATP gamma phosphate is transferred to the NDP beta phosphate via a ping-pong mechanism, using a phosphorylated active-site intermediate. This is Nucleoside diphosphate kinase (swoH) from Emericella nidulans (strain FGSC A4 / ATCC 38163 / CBS 112.46 / NRRL 194 / M139) (Aspergillus nidulans).